Here is a 223-residue protein sequence, read N- to C-terminus: Octanoyltransferase (223 aa).

A BPL/LPL catalytic domain is found at 35–214; sequence GEARELIWLL…HFPAMLAGLR (180 aa). Residues 74–81, 145–147, and 158–160 each bind substrate; these read RGGRYTYH, AIG, and GFS. The Acyl-thioester intermediate role is filled by C176.

Belongs to the LipB family.

Its subcellular location is the cytoplasm. The catalysed reaction is octanoyl-[ACP] + L-lysyl-[protein] = N(6)-octanoyl-L-lysyl-[protein] + holo-[ACP] + H(+). It functions in the pathway protein modification; protein lipoylation via endogenous pathway; protein N(6)-(lipoyl)lysine from octanoyl-[acyl-carrier-protein]: step 1/2. Functionally, catalyzes the transfer of endogenously produced octanoic acid from octanoyl-acyl-carrier-protein onto the lipoyl domains of lipoate-dependent enzymes. Lipoyl-ACP can also act as a substrate although octanoyl-ACP is likely to be the physiological substrate. In Rhizorhabdus wittichii (strain DSM 6014 / CCUG 31198 / JCM 15750 / NBRC 105917 / EY 4224 / RW1) (Sphingomonas wittichii), this protein is Octanoyltransferase.